The sequence spans 337 residues: Glyceraldehyde-3-phosphate dehydrogenase (337 aa).

NAD(+)-binding positions include 12-13 (RI), Asp34, and Lys79. D-glyceraldehyde 3-phosphate-binding positions include 150 to 152 (SCT), Thr181, 210 to 211 (TG), and Arg233. The active-site Nucleophile is the Cys151. Asn315 is an NAD(+) binding site.

Belongs to the glyceraldehyde-3-phosphate dehydrogenase family. In terms of assembly, homotetramer.

Its subcellular location is the cytoplasm. It catalyses the reaction D-glyceraldehyde 3-phosphate + phosphate + NAD(+) = (2R)-3-phospho-glyceroyl phosphate + NADH + H(+). It participates in carbohydrate degradation; glycolysis; pyruvate from D-glyceraldehyde 3-phosphate: step 1/5. In Phaeosphaeria nodorum (strain SN15 / ATCC MYA-4574 / FGSC 10173) (Glume blotch fungus), this protein is Glyceraldehyde-3-phosphate dehydrogenase (GPD1).